We begin with the raw amino-acid sequence, 171 residues long: Viral CASP8 and FADD-like apoptosis regulator (171 aa).

DED domains are found at residues 1–74 (MSHY…RIFG) and 92–171 (PFRC…NLQV).

As to quaternary structure, associates with the death-inducing signaling complex (DISC) formed by TNFRSF6, FADD and caspase-8. Interacts with FADD.

Inhibits TNFRSF1A, TNFRSF6, TNFRSF10 and TNFRSF12 induced apoptosis. May interfere with caspase-8 recruitment and activation at the death-inducing signaling complex (DISC). May lead to higher virus production and contribute to virus persistence and oncogenicity. The sequence is that of Viral CASP8 and FADD-like apoptosis regulator from Equus caballus (Horse).